We begin with the raw amino-acid sequence, 50 residues long: Ampulexin 2 (50 aa).

The N-terminal stretch at 1–26 (MKAIMVLFYVMTLTIIGSFSMVSGSP) is a signal peptide.

In terms of assembly, dimer; disulfide-linked. As to expression, expressed in venom sac and, to a lesser extent, in venom gland. Not expressed in brain.

It is found in the secreted. In terms of biological role, amphipathic peptide which probably adopts an alpha-helical structure. Has no antimicrobial activity against E.coli DH5alpha or B.thuringiensis. Is not cytotoxic in vitro. This Ampulex compressa (Emerald cockroach wasp) protein is Ampulexin 2.